Reading from the N-terminus, the 594-residue chain is Cryptochrome-2 (594 aa).

The Photolyase/cryptochrome alpha/beta domain occupies 21 to 150 (ASSVHWFRKG…EVVTENSHTL (130 aa)). Residue Lys29 forms a Glycyl lysine isopeptide (Lys-Gly) (interchain with G-Cter in ubiquitin) linkage. Phosphoserine is present on Ser89. Glycyl lysine isopeptide (Lys-Gly) (interchain with G-Cter in ubiquitin) cross-links involve residues Lys125 and Lys241. A Phosphoserine; by MAPK modification is found at Ser265. Ser270 is a binding site for FAD. Ser298 is modified (phosphoserine). Residue Gln307 coordinates FAD. Residue Lys347 forms a Glycyl lysine isopeptide (Lys-Gly) (interchain with G-Cter in ubiquitin) linkage. FAD-binding positions include His373 and 405 to 407 (DAD). The interval 389-488 (WVSWESGVRV…IIGVDYPRPI (100 aa)) is required for inhibition of CLOCK-BMAL1-mediated transcription. Residues Lys474 and Lys503 each participate in a glycyl lysine isopeptide (Lys-Gly) (interchain with G-Cter in ubiquitin) cross-link. The disordered stretch occupies residues 532 to 594 (VAEPGSSQAG…PAQEPPSKDS (63 aa)). The segment covering 536–547 (GSSQAGSISNTG) has biased composition (polar residues). Ser553 bears the Phosphoserine; by GSK3-beta mark. Phosphoserine; by DYRK1A and MAPK is present on Ser557.

The protein belongs to the DNA photolyase class-1 family. Component of the circadian core oscillator, which includes the CRY proteins, CLOCK or NPAS2, BMAL1 or BMAL2, CSNK1D and/or CSNK1E, TIMELESS, and the PER proteins. Interacts with TIMELESS. Interacts directly with PER1, PER2 and PER3; interaction with PER2 inhibits its ubiquitination and vice versa. Interacts with CLOCK-BMAL1. Interacts with CLOCK. Interacts with BMAL1. Interacts with NFIL3. Interacts with FBXL3 and FBXL21. FBXL3, PER2 and the cofactor FAD compete for overlapping binding sites. FBXL3 cannot bind CRY2 that interacts already with PER2 or that contains bound FAD. Interacts with PPP5C (via TPR repeats); the interaction down-regulates the PPP5C phosphatase activity on CSNK1E. Interacts with nuclear receptors AR and NR3C1/GR; the interaction is ligand dependent. Interacts with PRKDC and CIART. Interacts with DDB1, USP7 and TARDBP. Interacts with HNF4A and PPARA. Interacts with PPARD (via domain NR LBD) and NR1I2 (via domain NR LBD) in a ligand-dependent manner. Interacts with PPARG, NR1I3 and VDR in a ligand-dependent manner. The cofactor is FAD. Requires (6R)-5,10-methylene-5,6,7,8-tetrahydrofolate as cofactor. Post-translationally, phosphorylation on Ser-265 by MAPK is important for the inhibition of CLOCK-BMAL1-mediated transcriptional activity. Phosphorylation by CSKNe requires interaction with PER1 or PER2. Phosphorylated in a circadian manner at Ser-553 and Ser-557 in the suprachiasmatic nucleus (SCN) and liver. Phosphorylation at Ser-557 by DYRK1A promotes subsequent phosphorylation at Ser-553 by GSK3-beta: the two-step phosphorylation at the neighboring Ser residues leads to its proteasomal degradation. Ubiquitinated by the SCF(FBXL3) and SCF(FBXL21) complexes, regulating the balance between degradation and stabilization. The SCF(FBXL3) complex is mainly nuclear and mediates ubiquitination and subsequent degradation of CRY2. In contrast, cytoplasmic SCF(FBXL21) complex-mediated ubiquitination leads to stabilize CRY2 and counteract the activity of the SCF(FBXL3) complex. The SCF(FBXL3) and SCF(FBXL21) complexes probably mediate ubiquitination at different Lys residues. The SCF(FBXL3) complex recognizes and binds CRY2 phosphorylated at Ser-553 and Ser-557. Ubiquitination may be inhibited by PER2. Deubiquitinated by USP7. Expressed in all tissues examined including heart, cerebellum, cerebral cortex, lung, liver, muscle, kidney and ovary. Highest levels in heart, liver and ovary. Highly expressed in the suprachiasmatic nucleus (SCN).

It is found in the cytoplasm. Its subcellular location is the nucleus. Its function is as follows. Transcriptional repressor which forms a core component of the circadian clock. The circadian clock, an internal time-keeping system, regulates various physiological processes through the generation of approximately 24 hour circadian rhythms in gene expression, which are translated into rhythms in metabolism and behavior. It is derived from the Latin roots 'circa' (about) and 'diem' (day) and acts as an important regulator of a wide array of physiological functions including metabolism, sleep, body temperature, blood pressure, endocrine, immune, cardiovascular, and renal function. Consists of two major components: the central clock, residing in the suprachiasmatic nucleus (SCN) of the brain, and the peripheral clocks that are present in nearly every tissue and organ system. Both the central and peripheral clocks can be reset by environmental cues, also known as Zeitgebers (German for 'timegivers'). The predominant Zeitgeber for the central clock is light, which is sensed by retina and signals directly to the SCN. The central clock entrains the peripheral clocks through neuronal and hormonal signals, body temperature and feeding-related cues, aligning all clocks with the external light/dark cycle. Circadian rhythms allow an organism to achieve temporal homeostasis with its environment at the molecular level by regulating gene expression to create a peak of protein expression once every 24 hours to control when a particular physiological process is most active with respect to the solar day. Transcription and translation of core clock components (CLOCK, NPAS2, BMAL1, BMAL2, PER1, PER2, PER3, CRY1 and CRY2) plays a critical role in rhythm generation, whereas delays imposed by post-translational modifications (PTMs) are important for determining the period (tau) of the rhythms (tau refers to the period of a rhythm and is the length, in time, of one complete cycle). A diurnal rhythm is synchronized with the day/night cycle, while the ultradian and infradian rhythms have a period shorter and longer than 24 hours, respectively. Disruptions in the circadian rhythms contribute to the pathology of cardiovascular diseases, cancer, metabolic syndromes and aging. A transcription/translation feedback loop (TTFL) forms the core of the molecular circadian clock mechanism. Transcription factors, CLOCK or NPAS2 and BMAL1 or BMAL2, form the positive limb of the feedback loop, act in the form of a heterodimer and activate the transcription of core clock genes and clock-controlled genes (involved in key metabolic processes), harboring E-box elements (5'-CACGTG-3') within their promoters. The core clock genes: PER1/2/3 and CRY1/2 which are transcriptional repressors form the negative limb of the feedback loop and interact with the CLOCK|NPAS2-BMAL1|BMAL2 heterodimer inhibiting its activity and thereby negatively regulating their own expression. This heterodimer also activates nuclear receptors NR1D1/2 and RORA/B/G, which form a second feedback loop and which activate and repress BMAL1 transcription, respectively. CRY1 and CRY2 have redundant functions but also differential and selective contributions at least in defining the pace of the SCN circadian clock and its circadian transcriptional outputs. Less potent transcriptional repressor in cerebellum and liver than CRY1, though less effective in lengthening the period of the SCN oscillator. Seems to play a critical role in tuning SCN circadian period by opposing the action of CRY1. With CRY1, dispensable for circadian rhythm generation but necessary for the development of intercellular networks for rhythm synchrony. May mediate circadian regulation of cAMP signaling and gluconeogenesis by blocking glucagon-mediated increases in intracellular cAMP concentrations and in CREB1 phosphorylation. Besides its role in the maintenance of the circadian clock, is also involved in the regulation of other processes. Plays a key role in glucose and lipid metabolism modulation, in part, through the transcriptional regulation of genes involved in these pathways, such as LEP or ACSL4. Represses glucocorticoid receptor NR3C1/GR-induced transcriptional activity by binding to glucocorticoid response elements (GREs). Represses the CLOCK-BMAL1 induced transcription of BHLHE40/DEC1 and NAMPT. Represses PPARD and its target genes in the skeletal muscle and limits exercise capacity. Represses the transcriptional activity of NR1I2. The sequence is that of Cryptochrome-2 (Cry2) from Rattus norvegicus (Rat).